The primary structure comprises 110 residues: UPF0060 membrane protein Francci3_2786 (110 aa).

4 helical membrane-spanning segments follow: residues 8 to 28, 33 to 53, 62 to 82, and 87 to 107; these read LLFV…WQGV, GPVW…VATL, ILAA…VAVD, and DRYD…IMYA.

It belongs to the UPF0060 family.

It localises to the cell membrane. The sequence is that of UPF0060 membrane protein Francci3_2786 from Frankia casuarinae (strain DSM 45818 / CECT 9043 / HFP020203 / CcI3).